Reading from the N-terminus, the 134-residue chain is Small ribosomal subunit protein uS8c (134 aa).

The protein belongs to the universal ribosomal protein uS8 family. Part of the 30S ribosomal subunit.

It localises to the plastid. Its function is as follows. One of the primary rRNA binding proteins, it binds directly to 16S rRNA central domain where it helps coordinate assembly of the platform of the 30S subunit. In Cuscuta reflexa (Southern Asian dodder), this protein is Small ribosomal subunit protein uS8c (rps8).